A 354-amino-acid chain; its full sequence is MNGTEGPNFYIPMSNKTGVVRSPFEYPQYYLAEPWQYSILCAYMFLLILLGFPINFMTLYVTIQHKKLRTPLNYILLNLAFANHFMVLCGFTVTMYSSMNGYFILGATGCYVEGFFATLGGEIALWSLVVLAIERYVVVCKPMSNFRFSENHAVMGVAFTWIMALSCAVPPLLGWSRYIPEGMQCSCGVDYYTLKPEVNNESFVIYMFVVHFTIPLIIIFFCYGRLVCTVKEAAAQQQESATTQKAEKEVTRMVIIMVVFFLICWVPYASVAFFIFSNQGSEFGPIFMTVPAFFAKSSSIYNPVIYIMLNKQFRNCMITTLCCGKNPFGEDDASSAATSKTEASSVSSSQVSPA.

The Extracellular segment spans residues 1-36; the sequence is MNGTEGPNFYIPMSNKTGVVRSPFEYPQYYLAEPWQ. 2 N-linked (GlcNAc...) asparagine glycosylation sites follow: Asn-2 and Asn-15. A helical transmembrane segment spans residues 37–61; the sequence is YSILCAYMFLLILLGFPINFMTLYV. The Cytoplasmic segment spans residues 62–73; sequence TIQHKKLRTPLN. A helical membrane pass occupies residues 74–96; it reads YILLNLAFANHFMVLCGFTVTMY. Topologically, residues 97 to 110 are extracellular; the sequence is SSMNGYFILGATGC. A disulfide bridge connects residues Cys-110 and Cys-187. The helical transmembrane segment at 111–133 threads the bilayer; sequence YVEGFFATLGGEIALWSLVVLAI. Positions 134 to 136 match the 'Ionic lock' involved in activated form stabilization motif; sequence ERY. Topologically, residues 134–152 are cytoplasmic; the sequence is ERYVVVCKPMSNFRFSENH. The chain crosses the membrane as a helical span at residues 153-173; that stretch reads AVMGVAFTWIMALSCAVPPLL. The Extracellular portion of the chain corresponds to 174 to 202; that stretch reads GWSRYIPEGMQCSCGVDYYTLKPEVNNES. Residues 203-224 form a helical membrane-spanning segment; it reads FVIYMFVVHFTIPLIIIFFCYG. Residues 225-252 lie on the Cytoplasmic side of the membrane; it reads RLVCTVKEAAAQQQESATTQKAEKEVTR. A helical membrane pass occupies residues 253–274; the sequence is MVIIMVVFFLICWVPYASVAFF. The Extracellular portion of the chain corresponds to 275–286; the sequence is IFSNQGSEFGPI. The chain crosses the membrane as a helical span at residues 287–308; sequence FMTVPAFFAKSSSIYNPVIYIM. Lys-296 carries the N6-(retinylidene)lysine modification. Residues 309–354 are Cytoplasmic-facing; sequence LNKQFRNCMITTLCCGKNPFGEDDASSAATSKTEASSVSSSQVSPA. Residues Cys-322 and Cys-323 are each lipidated (S-palmitoyl cysteine). Positions 331-354 are disordered; sequence DDASSAATSKTEASSVSSSQVSPA. Over residues 334–354 the composition is skewed to low complexity; the sequence is SSAATSKTEASSVSSSQVSPA.

The protein belongs to the G-protein coupled receptor 1 family. Opsin subfamily. Contains one covalently linked retinal chromophore. Upon light absorption, the covalently bound 11-cis-retinal is converted to all-trans-retinal. After hydrolysis of the Schiff base and release of the covalently bound all-trans-retinal, active rhodopsin is regenerated by binding of a fresh molecule of 11-cis-retinal.

The protein resides in the membrane. It is found in the cell projection. Its subcellular location is the cilium. The protein localises to the photoreceptor outer segment. Its function is as follows. Photoreceptor required for image-forming vision at low light intensity. Required for photoreceptor cell viability after birth. Light-induced isomerization of 11-cis to all-trans retinal triggers a conformational change that activates signaling via G-proteins. Subsequent receptor phosphorylation mediates displacement of the bound G-protein alpha subunit by arrestin and terminates signaling. The chain is Rhodopsin (RHO) from Bufo bufo (European toad).